The sequence spans 516 residues: Exodeoxyribonuclease 7 large subunit (516 aa).

The protein belongs to the XseA family. Heterooligomer composed of large and small subunits.

It is found in the cytoplasm. The enzyme catalyses Exonucleolytic cleavage in either 5'- to 3'- or 3'- to 5'-direction to yield nucleoside 5'-phosphates.. Functionally, bidirectionally degrades single-stranded DNA into large acid-insoluble oligonucleotides, which are then degraded further into small acid-soluble oligonucleotides. This Chlamydia trachomatis serovar A (strain ATCC VR-571B / DSM 19440 / HAR-13) protein is Exodeoxyribonuclease 7 large subunit.